Reading from the N-terminus, the 224-residue chain is CRIB domain-containing protein RIC1 (224 aa).

Positions 29–42 (IGFPTDVKHVAHIG) constitute a CRIB domain. The tract at residues 38–224 (VAHIGSDGPT…SVDTTCNDII (187 aa)) is disordered. Polar residues-rich tracts occupy residues 69–84 (SRGNSNKYNPQGTNQR), 114–132 (PNHNGSPPRKSSGNAASSD), 144–155 (AHGSTDSSNDQE), and 215–224 (SVDTTCNDII).

In terms of assembly, interacts with ARAC11/ROP1. As to expression, expressed in columella cells from the root tip and epidermal cells at the base of lateral roots, leaves, stems, flowers, anthers, pollen and siliques.

The protein resides in the cytoplasm. It is found in the cytoskeleton. In terms of biological role, functions as a downstream effector of Rho-related GTP binding proteins of the 'Rho of Plants' (ROPs) family. Participates in the propagation of ROP GTPase signals in specific cellular responses. Required for cortical microtubule organization. Promotes microtubule bundling and formation of well-ordered microtubule arrays in the neck region of pavement cells. This restricts cell lateral expansion to generate the narrow neck morphology of pavement cells. Its function is inhibited when it interacts with activated ARAC4/ROP2. Represses ARAC4/ROP2 activation and antagonizes the RIC4-actin pathway that promotes the assembly of cortical actin microfilaments. Acts as a downstream effector of ARAC3/ROP6 which functions in a signaling pathway that negatively regulates clathrin-mediated endocytosis and internalization of PIN1 and PIN2. Required for the asymmetric auxin distribution during root gravitropism and vascular patterning. Positively regulates auxin responses, but negatively regulates ABA responses during lateral root development and primary root elongation. The polypeptide is CRIB domain-containing protein RIC1 (RIC1) (Arabidopsis thaliana (Mouse-ear cress)).